Consider the following 174-residue polypeptide: UPF0316 protein LMHCC_0787 (174 aa).

Transmembrane regions (helical) follow at residues Gly-4 to Val-24, Leu-36 to Leu-56, and Ile-62 to Ile-82.

This sequence belongs to the UPF0316 family.

It localises to the cell membrane. This chain is UPF0316 protein LMHCC_0787, found in Listeria monocytogenes serotype 4a (strain HCC23).